Here is a 141-residue protein sequence, read N- to C-terminus: MKMTKVLKPSEVQRDWVLIDAEGKTFGRILTEVATLLRGKHKPSFTPNVDCGDYVVIINAEKAKFTGVKLEDKEYFTHSGYFGSTKSKKLGDMLENHTEKLYKLAVRGMLPKTTLGRQMLKKLKVYAGAEHPHTAQINKEA.

This sequence belongs to the universal ribosomal protein uL13 family. In terms of assembly, part of the 50S ribosomal subunit.

In terms of biological role, this protein is one of the early assembly proteins of the 50S ribosomal subunit, although it is not seen to bind rRNA by itself. It is important during the early stages of 50S assembly. This chain is Large ribosomal subunit protein uL13, found in Sulfurovum sp. (strain NBC37-1).